Here is a 212-residue protein sequence, read N- to C-terminus: Probable nicotinate-nucleotide adenylyltransferase (212 aa).

This sequence belongs to the NadD family.

It catalyses the reaction nicotinate beta-D-ribonucleotide + ATP + H(+) = deamido-NAD(+) + diphosphate. The protein operates within cofactor biosynthesis; NAD(+) biosynthesis; deamido-NAD(+) from nicotinate D-ribonucleotide: step 1/1. Its function is as follows. Catalyzes the reversible adenylation of nicotinate mononucleotide (NaMN) to nicotinic acid adenine dinucleotide (NaAD). The chain is Probable nicotinate-nucleotide adenylyltransferase from Shewanella sp. (strain ANA-3).